The following is a 286-amino-acid chain: Bifunctional protein FolD 2 (286 aa).

Residues 165–167 (GRG), threonine 192, and isoleucine 233 contribute to the NADP(+) site.

This sequence belongs to the tetrahydrofolate dehydrogenase/cyclohydrolase family. Homodimer.

It carries out the reaction (6R)-5,10-methylene-5,6,7,8-tetrahydrofolate + NADP(+) = (6R)-5,10-methenyltetrahydrofolate + NADPH. The enzyme catalyses (6R)-5,10-methenyltetrahydrofolate + H2O = (6R)-10-formyltetrahydrofolate + H(+). It participates in one-carbon metabolism; tetrahydrofolate interconversion. Functionally, catalyzes the oxidation of 5,10-methylenetetrahydrofolate to 5,10-methenyltetrahydrofolate and then the hydrolysis of 5,10-methenyltetrahydrofolate to 10-formyltetrahydrofolate. The chain is Bifunctional protein FolD 2 from Salinispora arenicola (strain CNS-205).